Here is a 184-residue protein sequence, read N- to C-terminus: Holliday junction branch migration complex subunit RuvA (184 aa).

The interval 1-62 (MIVGLVGEVL…EDSESLYGFV (62 aa)) is domain I. Positions 63–134 (DINEKKMFDR…ELGEFDISES (72 aa)) are domain II. Residues 134 to 135 (SN) form a flexible linker region. A domain III region spans residues 136–184 (VTSSAFQEASMALQSLGFKKEQIQKALQECTATDTASLVKEALKKIQKL).

The protein belongs to the RuvA family. In terms of assembly, homotetramer. Forms an RuvA(8)-RuvB(12)-Holliday junction (HJ) complex. HJ DNA is sandwiched between 2 RuvA tetramers; dsDNA enters through RuvA and exits via RuvB. An RuvB hexamer assembles on each DNA strand where it exits the tetramer. Each RuvB hexamer is contacted by two RuvA subunits (via domain III) on 2 adjacent RuvB subunits; this complex drives branch migration. In the full resolvosome a probable DNA-RuvA(4)-RuvB(12)-RuvC(2) complex forms which resolves the HJ.

It localises to the cytoplasm. Its function is as follows. The RuvA-RuvB-RuvC complex processes Holliday junction (HJ) DNA during genetic recombination and DNA repair, while the RuvA-RuvB complex plays an important role in the rescue of blocked DNA replication forks via replication fork reversal (RFR). RuvA specifically binds to HJ cruciform DNA, conferring on it an open structure. The RuvB hexamer acts as an ATP-dependent pump, pulling dsDNA into and through the RuvAB complex. HJ branch migration allows RuvC to scan DNA until it finds its consensus sequence, where it cleaves and resolves the cruciform DNA. The chain is Holliday junction branch migration complex subunit RuvA from Nitratiruptor sp. (strain SB155-2).